The chain runs to 22 residues: Large ribosomal subunit protein bL32 (22 aa).

Positions 1-22 are disordered; sequence CVPKRKVSPSXRNMRXAHDXLT.

This sequence belongs to the bacterial ribosomal protein bL32 family.

The chain is Large ribosomal subunit protein bL32 (rpmF) from Brevundimonas vesicularis (Pseudomonas vesicularis).